The sequence spans 473 residues: Aspartyl/glutamyl-tRNA(Asn/Gln) amidotransferase subunit B (473 aa).

The protein belongs to the GatB/GatE family. GatB subfamily. As to quaternary structure, heterotrimer of A, B and C subunits.

The enzyme catalyses L-glutamyl-tRNA(Gln) + L-glutamine + ATP + H2O = L-glutaminyl-tRNA(Gln) + L-glutamate + ADP + phosphate + H(+). It catalyses the reaction L-aspartyl-tRNA(Asn) + L-glutamine + ATP + H2O = L-asparaginyl-tRNA(Asn) + L-glutamate + ADP + phosphate + 2 H(+). Allows the formation of correctly charged Asn-tRNA(Asn) or Gln-tRNA(Gln) through the transamidation of misacylated Asp-tRNA(Asn) or Glu-tRNA(Gln) in organisms which lack either or both of asparaginyl-tRNA or glutaminyl-tRNA synthetases. The reaction takes place in the presence of glutamine and ATP through an activated phospho-Asp-tRNA(Asn) or phospho-Glu-tRNA(Gln). The sequence is that of Aspartyl/glutamyl-tRNA(Asn/Gln) amidotransferase subunit B from Levilactobacillus brevis (strain ATCC 367 / BCRC 12310 / CIP 105137 / JCM 1170 / LMG 11437 / NCIMB 947 / NCTC 947) (Lactobacillus brevis).